A 176-amino-acid polypeptide reads, in one-letter code: NAD(P)H-quinone oxidoreductase subunit J (176 aa).

Residues 1–32 (MEKEGLAKSSDTSIKKEGFISQSLSKDGIPNQ) form a disordered region. The span at 20–32 (ISQSLSKDGIPNQ) shows a compositional bias: polar residues.

This sequence belongs to the complex I 30 kDa subunit family. As to quaternary structure, NDH-1 can be composed of about 15 different subunits; different subcomplexes with different compositions have been identified which probably have different functions.

The protein localises to the cellular thylakoid membrane. The catalysed reaction is a plastoquinone + NADH + (n+1) H(+)(in) = a plastoquinol + NAD(+) + n H(+)(out). It catalyses the reaction a plastoquinone + NADPH + (n+1) H(+)(in) = a plastoquinol + NADP(+) + n H(+)(out). Functionally, NDH-1 shuttles electrons from an unknown electron donor, via FMN and iron-sulfur (Fe-S) centers, to quinones in the respiratory and/or the photosynthetic chain. The immediate electron acceptor for the enzyme in this species is believed to be plastoquinone. Couples the redox reaction to proton translocation, and thus conserves the redox energy in a proton gradient. Cyanobacterial NDH-1 also plays a role in inorganic carbon-concentration. The protein is NAD(P)H-quinone oxidoreductase subunit J of Prochlorococcus marinus (strain MIT 9215).